Consider the following 1000-residue polypeptide: Vacuolar sorting protein 39 (1000 aa).

The 267-residue stretch at proline 16 to valine 282 folds into the CNH domain. A disordered region spans residues aspartate 394–serine 413. A CHCR repeat occupies tyrosine 607–aspartate 796. Residues glycine 844 to glutamate 864 form a disordered region.

It belongs to the VAM6/VPS39 family. In terms of assembly, homooligomer. Component of the homotypic fusion and vacuole protein sorting (HOPS) complex composed of the class C Vps core proteins VPS11, VCL1, VPS18 and VPS33, which in HOPS further associates with VPS39 and VPS41. Interacts directly with VPS11. Binds to RABG3B.

It localises to the cytoplasm. The protein localises to the vacuole membrane. Functionally, essential protein required during embryogenesis. Believed to act in part as a component of the putative HOPS endosomal tethering complex. HOPS is required for the central vacuole formation. May play a role in clustering and fusion of late endosomes and lysosomes. Plays a role in vesicle-mediated protein trafficking to lysosomal compartments including the endocytic membrane transport and autophagic pathways. Required for fusion of endosomes and autophagosomes with lysosomes. In Arabidopsis thaliana (Mouse-ear cress), this protein is Vacuolar sorting protein 39.